An 88-amino-acid chain; its full sequence is Hemotin (88 aa).

Over 1–14 the chain is Lumenal; sequence MDCFKVFEVVFQSE. The helical transmembrane segment at 15 to 37 threads the bilayer; it reads INPLLLIPAVATIALTLCCYCYH. Residues 38–88 lie on the Cytoplasmic side of the membrane; it reads GYQWIRDRRTARIEEQQAQLPLPLSRISITPGCSMVATTKLTHSRNSVDIY.

In terms of assembly, interacts with 14-3-3zeta. In terms of tissue distribution, expressed in hemocytes.

Its subcellular location is the early endosome membrane. Negatively regulates early endosome maturation by binding to and repressing the activity of 14-3-3zeta which prevents the 14-3-3zeta-mediated activation of phosphoinositide 3-kinase Pi3K68D. This, in turn, inhibits the Pi3K68D-mediated conversion of phosphatidylinositol to phosphatidylinositol-3-phosphate and prevents progression of early endosomes through the maturation process which regulates subsequent steps of phagocytic processing. The chain is Hemotin from Drosophila melanogaster (Fruit fly).